A 214-amino-acid chain; its full sequence is ATP-dependent Clp protease proteolytic subunit (214 aa).

Catalysis depends on S114, which acts as the Nucleophile. H139 is an active-site residue.

Belongs to the peptidase S14 family. Fourteen ClpP subunits assemble into 2 heptameric rings which stack back to back to give a disk-like structure with a central cavity, resembling the structure of eukaryotic proteasomes.

It localises to the cytoplasm. It carries out the reaction Hydrolysis of proteins to small peptides in the presence of ATP and magnesium. alpha-casein is the usual test substrate. In the absence of ATP, only oligopeptides shorter than five residues are hydrolyzed (such as succinyl-Leu-Tyr-|-NHMec, and Leu-Tyr-Leu-|-Tyr-Trp, in which cleavage of the -Tyr-|-Leu- and -Tyr-|-Trp bonds also occurs).. Functionally, cleaves peptides in various proteins in a process that requires ATP hydrolysis. Has a chymotrypsin-like activity. Plays a major role in the degradation of misfolded proteins. The polypeptide is ATP-dependent Clp protease proteolytic subunit (Nitrosomonas eutropha (strain DSM 101675 / C91 / Nm57)).